A 481-amino-acid chain; its full sequence is Zygotic gap protein knirps (481 aa).

The segment at residues Asn-2 to Tyr-78 is a DNA-binding region (nuclear receptor). NR C4-type zinc fingers lie at residues Cys-5–Cys-25 and Cys-42–Cys-66. 5 stretches are compositionally biased toward low complexity: residues Ala-100–Gly-111, Gln-127–Gln-148, Thr-245–Pro-264, Ser-316–Ser-335, and Thr-420–Thr-440. Disordered regions lie at residues Ala-100–Gly-161, Ser-231–Ile-294, Leu-308–Phe-336, and Thr-420–Ala-442.

The protein belongs to the nuclear hormone receptor family. NR0 subfamily.

Its subcellular location is the nucleus. Functionally, transcriptional repressor. Binds to multiple sites in the eve stripe 3 enhancer element. Plays an essential role in the segmentation process both by refining the expression patterns of gap genes and by establishing pair-rules stripes of gene expression. This is Zygotic gap protein knirps (kni) from Drosophila virilis (Fruit fly).